The chain runs to 214 residues: Endothelial cell-specific chemotaxis regulator (214 aa).

An N-terminal signal peptide occupies residues 1–18 (MRLGSAILGLLLLQGYSS). Residues 19-130 (QPTTTQTSQE…PTPTSESVLT (112 aa)) are Extracellular-facing. The tract at residues 23-107 (TQTSQEILQK…DATPSPETTS (85 aa)) is disordered. Polar residues predominate over residues 28-57 (EILQKSSQVSLVSNQPVTPRSSTMDKQSLS). Residues 80–90 (RSSSSSSSSSS) show a composition bias toward low complexity. Residues 131-151 (VAAFGVISFIVILVVVVIILV) traverse the membrane as a helical segment. Topologically, residues 152–214 (SVVSLRFKCR…KGSMSAEKIL (63 aa)) are cytoplasmic. The tract at residues 163 to 184 (NKESEDPQKPGSSGLSESCSTA) is disordered. The span at 172-184 (PGSSGLSESCSTA) shows a compositional bias: polar residues. 2 positions are modified to phosphoserine: Ser204 and Ser207.

Belongs to the ECSCR family. As to quaternary structure, interacts with FLNA. Interacts with the 20S proteasome subunit PSMA7. Post-translationally, may be heavily O-glycosylated. Expressed in all tissues examined, highest expression was observed in lung and spleen endothelial cells.

The protein resides in the cell membrane. It is found in the cytoplasm. Functionally, regulates endothelial chemotaxis and tube formation. Has a role in angiogenesis and apoptosis via modulation of the actin cytoskeleton and facilitation of proteasomal degradation of the apoptosis inhibitors BIRC3/IAP1 and BIRC2/IAP2. In Mus musculus (Mouse), this protein is Endothelial cell-specific chemotaxis regulator (Ecscr).